The following is a 258-amino-acid chain: UPF0246 protein YaaA (258 aa).

Belongs to the UPF0246 family.

In Shigella dysenteriae serotype 1 (strain Sd197), this protein is UPF0246 protein YaaA.